A 539-amino-acid polypeptide reads, in one-letter code: Chaperonin GroEL 1 (539 aa).

Residues 29–32 (TLGP), 86–90 (DGTTT), glycine 413, 478–480 (NAA), and aspartate 494 each bind ATP. Residues 520–539 (IVDKPAEPEDDGHGHHGHAH) are disordered. A compositionally biased stretch (basic and acidic residues) spans 523 to 533 (KPAEPEDDGHG).

The protein belongs to the chaperonin (HSP60) family. Forms a cylinder of 14 subunits composed of two heptameric rings stacked back-to-back. Interacts with the co-chaperonin GroES.

Its subcellular location is the cytoplasm. It catalyses the reaction ATP + H2O + a folded polypeptide = ADP + phosphate + an unfolded polypeptide.. In terms of biological role, together with its co-chaperonin GroES, plays an essential role in assisting protein folding. The GroEL-GroES system forms a nano-cage that allows encapsulation of the non-native substrate proteins and provides a physical environment optimized to promote and accelerate protein folding. The chain is Chaperonin GroEL 1 from Mycobacterium ulcerans (strain Agy99).